The following is a 258-amino-acid chain: UPF0246 protein YaaA (258 aa).

It belongs to the UPF0246 family.

In Escherichia coli O157:H7, this protein is UPF0246 protein YaaA.